We begin with the raw amino-acid sequence, 447 residues long: N-succinylarginine dihydrolase (447 aa).

Substrate-binding positions include 19–28 (AGLSFGNEAS), N110, and 137–138 (HR). E174 is an active-site residue. A substrate-binding site is contributed by R212. H248 is a catalytic residue. The substrate site is built by D250 and N359. The active-site Nucleophile is the C365.

This sequence belongs to the succinylarginine dihydrolase family. As to quaternary structure, homodimer.

It catalyses the reaction N(2)-succinyl-L-arginine + 2 H2O + 2 H(+) = N(2)-succinyl-L-ornithine + 2 NH4(+) + CO2. The protein operates within amino-acid degradation; L-arginine degradation via AST pathway; L-glutamate and succinate from L-arginine: step 2/5. Functionally, catalyzes the hydrolysis of N(2)-succinylarginine into N(2)-succinylornithine, ammonia and CO(2). In Salmonella typhi, this protein is N-succinylarginine dihydrolase.